A 512-amino-acid polypeptide reads, in one-letter code: 2,3-bisphosphoglycerate-independent phosphoglycerate mutase (512 aa).

Asp18 and Ser68 together coordinate Mn(2+). Ser68 functions as the Phosphoserine intermediate in the catalytic mechanism. Residues His129, 159–160 (RD), Arg191, Arg197, 265–268 (RPDR), and Lys338 contribute to the substrate site. Asp403, His407, Asp444, His445, and His462 together coordinate Mn(2+).

This sequence belongs to the BPG-independent phosphoglycerate mutase family. As to quaternary structure, monomer. Mn(2+) serves as cofactor.

The catalysed reaction is (2R)-2-phosphoglycerate = (2R)-3-phosphoglycerate. It functions in the pathway carbohydrate degradation; glycolysis; pyruvate from D-glyceraldehyde 3-phosphate: step 3/5. Catalyzes the interconversion of 2-phosphoglycerate and 3-phosphoglycerate. This chain is 2,3-bisphosphoglycerate-independent phosphoglycerate mutase, found in Mesomycoplasma hyopneumoniae (strain 232) (Mycoplasma hyopneumoniae).